A 366-amino-acid polypeptide reads, in one-letter code: MQVIVALAALSSLAAPALGFSIPRGVPVSQSMIDVKLSATGNSMVKATITNNGNRALNLLKFHTIMDSNPTRKVSIESEDGKEIQFTGMMPTYKEKDLKPSYFISLPPKGTVEHSFDIARTHDLSRGGKFTLKAEGMVPIAEENGTEITGAAKYHSNELHMTIDGEKAASVENAFGIVKRGPRSRITKRTSIDMQSCGNSQELQALTAALKASAQLSSMSAQAVSQNQDKYMEYFKDPQYMQTVQSRFQAVAQESSSTTGGGTTYHCSDTMGGCEEGVLAYTLPSQNEVFNCPIYYSDLPPLSNECHAQDQATTTLHELTHNPAVQEPFCEDNGYGYERATALSAEKAVQNADSYALFANAIYVGC.

An N-terminal signal peptide occupies residues Met1–Gly19. A propeptide spanning residues Phe20–Arg189 is cleaved from the precursor. 3 disulfides stabilise this stretch: Cys197–Cys267, Cys274–Cys292, and Cys306–Cys366. His317 serves as a coordination point for Zn(2+). Glu318 is a catalytic residue. 2 residues coordinate Zn(2+): His321 and Asp332.

The protein belongs to the peptidase M35 family. Zn(2+) serves as cofactor.

It is found in the secreted. It catalyses the reaction Preferential cleavage of bonds with hydrophobic residues in P1'. Also 3-Asn-|-Gln-4 and 8-Gly-|-Ser-9 bonds in insulin B chain.. Functionally, probable secreted metalloprotease that shows high activities on basic nuclear substrates such as histone and protamine. May be involved in virulence. The polypeptide is Probable neutral protease 2 homolog B (NpII-B) (Trichophyton rubrum (Athlete's foot fungus)).